The sequence spans 430 residues: Asparagine--tRNA ligase (430 aa).

The protein belongs to the class-II aminoacyl-tRNA synthetase family.

The protein resides in the cytoplasm. The enzyme catalyses tRNA(Asn) + L-asparagine + ATP = L-asparaginyl-tRNA(Asn) + AMP + diphosphate + H(+). This chain is Asparagine--tRNA ligase, found in Thermococcus gammatolerans (strain DSM 15229 / JCM 11827 / EJ3).